A 585-amino-acid chain; its full sequence is Glutamine--tRNA ligase (585 aa).

The 'HIGH' region motif lies at 51-61; it reads PEPNGYLHIGH. Residues 52-54 and 58-64 each bind ATP; these read EPN and HIGHAKS. The L-glutamine site is built by aspartate 84 and tyrosine 238. ATP contacts are provided by residues threonine 257 and 292 to 293; that span reads RL. A 'KMSKS' region motif is present at residues 299–303; it reads ITSKR.

It belongs to the class-I aminoacyl-tRNA synthetase family. Monomer.

It is found in the cytoplasm. The enzyme catalyses tRNA(Gln) + L-glutamine + ATP = L-glutaminyl-tRNA(Gln) + AMP + diphosphate. In Cupriavidus taiwanensis (strain DSM 17343 / BCRC 17206 / CCUG 44338 / CIP 107171 / LMG 19424 / R1) (Ralstonia taiwanensis (strain LMG 19424)), this protein is Glutamine--tRNA ligase.